A 279-amino-acid chain; its full sequence is Protein phosphatase 1 regulatory subunit 3E (279 aa).

2 positions are modified to phosphoserine: serine 16 and serine 33. The tract at residues 28–86 (RSQRPSLEEEPEEEPGEGGTRFGARSRAHAPSRGRRARSAPAGGGGARAPRSRSPDTRK) is disordered. The span at 51–65 (ARSRAHAPSRGRRAR) shows a compositional bias: basic residues. The residue at position 66 (serine 66) is a Phosphoserine. The PP1-binding motif motif lies at 87–90 (RVRF). Positions 154–259 (AARLLTQRIC…NNGGRDYALR (106 aa)) constitute a CBM21 domain. The segment at 176 to 198 (GSARVVDLAYEKRVSVRWSADGW) is glycogen-binding motif. The substrate-binding motif stretch occupies residues 248–256 (WDNNGGRDY).

As to expression, expressed in skeletal muscle and heart with barely detectable levels in liver.

Acts as a glycogen-targeting subunit for PP1. PP1 is involved in glycogen metabolism and contributes to the activation of glycogen synthase leading to an increase in glycogen synthesis. This chain is Protein phosphatase 1 regulatory subunit 3E (PPP1R3E), found in Homo sapiens (Human).